The primary structure comprises 467 residues: Cis-zeatin O-glucosyltransferase 1 (467 aa).

The Proton acceptor role is filled by His21. 2 residues coordinate an anthocyanidin: His21 and Asn91. The active-site Charge relay is the Asp127. UDP-alpha-D-glucose contacts are provided by Ala343, Gln345, His360, Trp363, Asn364, Ser365, Glu368, Asp384, and Gln385.

The protein belongs to the UDP-glycosyltransferase family. In terms of tissue distribution, highly expressed in root. Expressed at lower level in kernel and cob. Weakly expressed in leaves. Weakly or not expressed in stems.

It catalyses the reaction cis-zeatin + UDP-alpha-D-glucose = O-beta-D-glucosyl-cis-zeatin + UDP + H(+). In terms of biological role, utilizes UDP-glucose as the sugar donor and catalyzes the formation of O-beta-D-glucosyl-cis-zeatin from cis-zeatin. May regulate active versus storage forms of cytokinins and could have an impact on seed growth. The protein is Cis-zeatin O-glucosyltransferase 1 (CISZOG1) of Zea mays (Maize).